The following is a 458-amino-acid chain: ATP synthase subunit beta (458 aa).

Residue 148–155 (GGAGVGKT) coordinates ATP.

Belongs to the ATPase alpha/beta chains family. F-type ATPases have 2 components, CF(1) - the catalytic core - and CF(0) - the membrane proton channel. CF(1) has five subunits: alpha(3), beta(3), gamma(1), delta(1), epsilon(1). CF(0) has three main subunits: a(1), b(2) and c(9-12). The alpha and beta chains form an alternating ring which encloses part of the gamma chain. CF(1) is attached to CF(0) by a central stalk formed by the gamma and epsilon chains, while a peripheral stalk is formed by the delta and b chains.

The protein resides in the cell inner membrane. It carries out the reaction ATP + H2O + 4 H(+)(in) = ADP + phosphate + 5 H(+)(out). In terms of biological role, produces ATP from ADP in the presence of a proton gradient across the membrane. The catalytic sites are hosted primarily by the beta subunits. The chain is ATP synthase subunit beta from Halorhodospira halophila (strain DSM 244 / SL1) (Ectothiorhodospira halophila (strain DSM 244 / SL1)).